The chain runs to 643 residues: Leukocyte immunoglobulin-like receptor subfamily B member 5 (643 aa).

The first 23 residues, 1-23, serve as a signal peptide directing secretion; the sequence is MTLTLSVLICLGLNVGPRTCVQA. The Extracellular portion of the chain corresponds to 24–458; the sequence is GTLPKPTLWA…PQSGLGRHLG (435 aa). Ig-like C2-type domains are found at residues 27 to 116, 111 to 228, 224 to 313, and 337 to 418; these read PKPT…LELV, DPLE…SLLI, PSLL…DPLD, and GENV…LVVS. C49 and C98 are oxidised to a cystine. N139 is a glycosylation site (N-linked (GlcNAc...) asparagine). 2 disulfide bridges follow: C144-C195 and C244-C295. Residues N279 and N339 are each glycosylated (N-linked (GlcNAc...) asparagine). A disulfide bond links C344 and C395. Positions 417 to 433 are enriched in low complexity; it reads VSGPSGDPSLSPTGSTP. The segment at 417 to 449 is disordered; it reads VSGPSGDPSLSPTGSTPTPGPEDQPLTPTGLDP. Residues 459 to 479 form a helical membrane-spanning segment; that stretch reads VVTGVSVAFVLLLFLLLFLLL. At 480-643 the chain is on the cytoplasmic side; that stretch reads RHRHQSKHRT…PSIYAPLAIH (164 aa). The tract at residues 493-643 is disordered; that stretch reads FYRPAGAAGP…PSIYAPLAIH (151 aa). Position 514 is a phosphoserine (S514). Basic and acidic residues-rich tracts occupy residues 531 to 549, 557 to 567, and 579 to 592; these read TQPK…RDED, EVKHSRPRREM, and LDTK…DRQM. The ITIM motif 1 motif lies at 605-610; it reads VTYAQL. The segment covering 615-631 has biased composition (basic and acidic residues); that stretch reads LRREATEPPPSQEREPP. Residues 635–640 carry the ITIM motif 2 motif; that stretch reads SIYAPL.

It localises to the membrane. Functionally, may act as receptor for class I MHC antigens. In Pan troglodytes (Chimpanzee), this protein is Leukocyte immunoglobulin-like receptor subfamily B member 5 (LILRB5).